We begin with the raw amino-acid sequence, 147 residues long: MKILVMNGPNINFLGIREKGIYGEQNYEALVSMIQKKAEELGADVEVFQSNHEGAIIDKIQEAYYNDVDGIVINPGAFTHYSYAVRDALASVAAIPKIEVHISNVHTREEFRHTSVTVPVCNGQVVGLGLKGYLYAMEAVVDLAMKK.

Y22 (proton acceptor) is an active-site residue. Positions 74, 80, and 87 each coordinate substrate. Catalysis depends on H101, which acts as the Proton donor. Substrate contacts are provided by residues 102 to 103 (IS) and R112.

The protein belongs to the type-II 3-dehydroquinase family. Homododecamer.

It carries out the reaction 3-dehydroquinate = 3-dehydroshikimate + H2O. It functions in the pathway metabolic intermediate biosynthesis; chorismate biosynthesis; chorismate from D-erythrose 4-phosphate and phosphoenolpyruvate: step 3/7. Its function is as follows. Catalyzes a trans-dehydration via an enolate intermediate. In Lachnospira eligens (strain ATCC 27750 / DSM 3376 / VPI C15-48 / C15-B4) (Eubacterium eligens), this protein is 3-dehydroquinate dehydratase.